Here is a 327-residue protein sequence, read N- to C-terminus: Undecaprenyl-phosphate 4-deoxy-4-formamido-L-arabinose transferase (327 aa).

Transmembrane regions (helical) follow at residues 233-253 (ILSL…LLLI) and 268-288 (VFTL…GMGL).

The protein belongs to the glycosyltransferase 2 family.

It is found in the cell inner membrane. The enzyme catalyses UDP-4-deoxy-4-formamido-beta-L-arabinose + di-trans,octa-cis-undecaprenyl phosphate = 4-deoxy-4-formamido-alpha-L-arabinopyranosyl di-trans,octa-cis-undecaprenyl phosphate + UDP. It functions in the pathway glycolipid biosynthesis; 4-amino-4-deoxy-alpha-L-arabinose undecaprenyl phosphate biosynthesis; 4-amino-4-deoxy-alpha-L-arabinose undecaprenyl phosphate from UDP-4-deoxy-4-formamido-beta-L-arabinose and undecaprenyl phosphate: step 1/2. The protein operates within bacterial outer membrane biogenesis; lipopolysaccharide biosynthesis. Functionally, catalyzes the transfer of 4-deoxy-4-formamido-L-arabinose from UDP to undecaprenyl phosphate. The modified arabinose is attached to lipid A and is required for resistance to polymyxin and cationic antimicrobial peptides. In Pectobacterium carotovorum subsp. carotovorum (strain PC1), this protein is Undecaprenyl-phosphate 4-deoxy-4-formamido-L-arabinose transferase.